A 353-amino-acid chain; its full sequence is 26S proteasome non-ATPase regulatory subunit 8 (353 aa).

The segment at 1–25 (MFIKGRAAKTPRGEPRRSSRGGRKL) is disordered. A PCI domain is found at 165 to 334 (PSFERYMAQL…QQKPEDSTIP (170 aa)). Lys300 is covalently cross-linked (Glycyl lysine isopeptide (Lys-Gly) (interchain with G-Cter in SUMO2)).

Belongs to the proteasome subunit S14 family. Component of the 19S proteasome regulatory particle complex. The 26S proteasome consists of a 20S core particle (CP) and two 19S regulatory subunits (RP). The regulatory particle is made of a lid composed of 9 subunits including PSMD8, a base containing 6 ATPases and few additional components. Interacts with DDI2. Interacts with TASOR. In terms of tissue distribution, expressed in the Sertoli cells of the testis.

Component of the 26S proteasome, a multiprotein complex involved in the ATP-dependent degradation of ubiquitinated proteins. This complex plays a key role in the maintenance of protein homeostasis by removing misfolded or damaged proteins, which could impair cellular functions, and by removing proteins whose functions are no longer required. Therefore, the proteasome participates in numerous cellular processes, including cell cycle progression, apoptosis, or DNA damage repair. The polypeptide is 26S proteasome non-ATPase regulatory subunit 8 (Psmd8) (Mus musculus (Mouse)).